The primary structure comprises 860 residues: Ribosome-releasing factor 2, mitochondrial (860 aa).

In terms of domain architecture, tr-type G spans 45–337; the sequence is DRTRNIGIIA…AVVNFLPSPL (293 aa). Residues 54–61, 118–122, and 172–175 contribute to the GTP site; these read AHIDAGKT, DTPGH, and NKMD.

The protein belongs to the TRAFAC class translation factor GTPase superfamily. Classic translation factor GTPase family. EF-G/EF-2 subfamily.

Its subcellular location is the mitochondrion. Its function is as follows. Mitochondrial GTPase that mediates the disassembly of ribosomes from messenger RNA at the termination of mitochondrial protein biosynthesis. Not involved in the GTP-dependent ribosomal translocation step during translation elongation. The chain is Ribosome-releasing factor 2, mitochondrial from Debaryomyces hansenii (strain ATCC 36239 / CBS 767 / BCRC 21394 / JCM 1990 / NBRC 0083 / IGC 2968) (Yeast).